The chain runs to 496 residues: N-succinylglutamate 5-semialdehyde dehydrogenase (496 aa).

229–234 serves as a coordination point for NAD(+); sequence GSYATG. Catalysis depends on residues Glu252 and Cys286.

This sequence belongs to the aldehyde dehydrogenase family. AstD subfamily.

It carries out the reaction N-succinyl-L-glutamate 5-semialdehyde + NAD(+) + H2O = N-succinyl-L-glutamate + NADH + 2 H(+). It functions in the pathway amino-acid degradation; L-arginine degradation via AST pathway; L-glutamate and succinate from L-arginine: step 4/5. Functionally, catalyzes the NAD-dependent reduction of succinylglutamate semialdehyde into succinylglutamate. The polypeptide is N-succinylglutamate 5-semialdehyde dehydrogenase (Legionella pneumophila subsp. pneumophila (strain Philadelphia 1 / ATCC 33152 / DSM 7513)).